A 628-amino-acid chain; its full sequence is Exonuclease V, mitochondrial (628 aa).

A mitochondrion-targeting transit peptide spans 1-21 (MSRFWHFKKFYFTSCYSMQRM). The disordered stretch occupies residues 37-58 (TSEHEQVQSISKEESRSLSSND). Basic and acidic residues predominate over residues 38–52 (SEHEQVQSISKEESR). [4Fe-4S] cluster-binding residues include cysteine 164, cysteine 586, cysteine 589, and cysteine 595.

The protein belongs to the EXO5 family. Monomer. Requires Mg(2+) as cofactor. The cofactor is [4Fe-4S] cluster.

It is found in the mitochondrion. Functionally, single strand DNA specific 5' exonuclease involved in mitochondrial DNA replication and recombination. Releases dinucleotides as main products of catalysis. Has the capacity to slide across 5'double-stranded DNA or 5'RNA sequences and resumes cutting two nucleotides downstream of the double-stranded-to-single-stranded junction or RNA-to-DNA junction, respectively. The polypeptide is Exonuclease V, mitochondrial (DEM1) (Candida albicans (strain SC5314 / ATCC MYA-2876) (Yeast)).